Reading from the N-terminus, the 231-residue chain is 5'-methylthioadenosine/S-adenosylhomocysteine nucleosidase (231 aa).

Glutamate 12 (proton acceptor) is an active-site residue. Residues glycine 78, valine 153, and 174 to 175 (ME) contribute to the substrate site. Aspartate 198 functions as the Proton donor in the catalytic mechanism.

The protein belongs to the PNP/UDP phosphorylase family. MtnN subfamily.

The catalysed reaction is S-adenosyl-L-homocysteine + H2O = S-(5-deoxy-D-ribos-5-yl)-L-homocysteine + adenine. It carries out the reaction S-methyl-5'-thioadenosine + H2O = 5-(methylsulfanyl)-D-ribose + adenine. It catalyses the reaction 5'-deoxyadenosine + H2O = 5-deoxy-D-ribose + adenine. It participates in amino-acid biosynthesis; L-methionine biosynthesis via salvage pathway; S-methyl-5-thio-alpha-D-ribose 1-phosphate from S-methyl-5'-thioadenosine (hydrolase route): step 1/2. In terms of biological role, catalyzes the irreversible cleavage of the glycosidic bond in both 5'-methylthioadenosine (MTA) and S-adenosylhomocysteine (SAH/AdoHcy) to adenine and the corresponding thioribose, 5'-methylthioribose and S-ribosylhomocysteine, respectively. Also cleaves 5'-deoxyadenosine, a toxic by-product of radical S-adenosylmethionine (SAM) enzymes, into 5-deoxyribose and adenine. The chain is 5'-methylthioadenosine/S-adenosylhomocysteine nucleosidase from Vibrio parahaemolyticus serotype O3:K6 (strain RIMD 2210633).